Consider the following 259-residue polypeptide: Probable UMP-CMP kinase 2 (259 aa).

Position 63 to 68 (63 to 68) interacts with ATP; it reads GSGKGT. Residues 83–112 are NMP; sequence SAGDLLRREIAMHTENGAMILNLIKDGKIV. A ribonucleoside 5'-phosphate contacts are provided by residues Arg-89, 110–112, and 137–140; these read KIV and GFPR. Residue Asn-144 participates in CMP binding. The segment at 175-183 is LID; that stretch reads NRNQGRIDD. Arg-176 serves as a coordination point for ATP. Residues Arg-180 and Arg-191 each coordinate a ribonucleoside 5'-phosphate. Gly-219 provides a ligand contact to ATP.

Belongs to the adenylate kinase family. UMP-CMP kinase subfamily. Monomer. It depends on Mg(2+) as a cofactor.

The protein resides in the cytoplasm. It is found in the nucleus. It carries out the reaction CMP + ATP = CDP + ADP. The catalysed reaction is dCMP + ATP = dCDP + ADP. The enzyme catalyses UMP + ATP = UDP + ADP. Functionally, catalyzes the phosphorylation of pyrimidine nucleoside monophosphates at the expense of ATP. Plays an important role in de novo pyrimidine nucleotide biosynthesis. Has preference for UMP and CMP as phosphate acceptors. The protein is Probable UMP-CMP kinase 2 (UMK2) of Arabidopsis thaliana (Mouse-ear cress).